Consider the following 363-residue polypeptide: Double-strand-specific pac1 ribonuclease (363 aa).

Disordered regions lie at residues 1 to 35 and 92 to 138; these read MGRF…KRSS and SRHD…PPLR. The span at 13–22 shows a compositional bias: low complexity; it reads DSSSSASDSL. Residues 24-35 are compositionally biased toward basic residues; the sequence is RGRRSLGHKRSS. At serine 122 the chain carries Phosphoserine. In terms of domain architecture, RNase III spans 139–262; the sequence is SEKLKEQVFM…YLGALILDGQ (124 aa). Residues 285–356 form the DRBM domain; sequence RPIDKLAKSK…AMQALEVLAK (72 aa).

The cofactor is Mg(2+).

It carries out the reaction Endonucleolytic cleavage to 5'-phosphomonoester.. Its function is as follows. Digests double-stranded RNA. Converts long double-stranded RNAs into short oligonucleotides, leaving 5'-phosphates on their cleavage products. Probably inhibits mating and meiosis by degrading a specific mRNA required for sexual development. This chain is Double-strand-specific pac1 ribonuclease (pac1), found in Schizosaccharomyces pombe (strain 972 / ATCC 24843) (Fission yeast).